The chain runs to 309 residues: Tagatose-6-phosphate kinase (309 aa).

It belongs to the carbohydrate kinase PfkB family. LacC subfamily.

The catalysed reaction is D-tagatofuranose 6-phosphate + ATP = D-tagatofuranose 1,6-bisphosphate + ADP + H(+). It participates in carbohydrate metabolism; D-tagatose 6-phosphate degradation; D-glyceraldehyde 3-phosphate and glycerone phosphate from D-tagatose 6-phosphate: step 1/2. This is Tagatose-6-phosphate kinase from Streptococcus pyogenes serotype M3 (strain SSI-1).